The following is a 630-amino-acid chain: SHC-transforming protein 4 (630 aa).

Residues 1–185 (MRERGQDSLA…RQDRHFLQHL (185 aa)) form a CH2 region. Disordered stretches follow at residues 39-80 (TSLD…QESP) and 118-150 (KLQESRDPGSSGPSSPETSLSRSGTAPPPQQDL). Over residues 125-142 (PGSSGPSSPETSLSRSGT) the composition is skewed to low complexity. The 184-residue stretch at 186 to 369 (LGMGMNYCVR…VHIDSHAEER (184 aa)) folds into the PID domain. A CH1 region spans residues 370-525 (EDHEYYNEIP…HIKQQLWSEE (156 aa)). Tyrosine 424 carries the phosphotyrosine modification. Composition is skewed to polar residues over residues 471 to 486 (LQSTPGSAGNQRSAQP) and 502 to 513 (PGATAQPASSHS). Residues 471–514 (LQSTPGSAGNQRSAQPLGSPWHCGKAPETVQPGATAQPASSHSL) are disordered. Positions 526 to 617 (CYHGKLSRKA…GSEVSLKQPV (92 aa)) constitute an SH2 domain.

Interacts (via PID domain) with phosphorylated MUSK (via NPXY motif); undergoes tyrosine phosphorylation downstream of activated MUSK. Interacts with GRB2; the interaction is dependent of Tyr-424 phosphorylation and increased by EGF. Phosphorylated; the phosphorylation is enhanced by EGF. Phosphorylation at Tyr-424 is required for the interaction with GRB2. Only expressed in melanomas. Weakly expressed in normal melanocytes and benign nevi. Highly expressed at the transition from radial growth phase to vertical growth phase and metastatic melanomas, when tumor cells acquire migratory competence and invasive potential.

The protein resides in the postsynaptic cell membrane. Activates both Ras-dependent and Ras-independent migratory pathways in melanomas. Contributes to the early phases of agrin-induced tyrosine phosphorylation of CHRNB1. The chain is SHC-transforming protein 4 (SHC4) from Homo sapiens (Human).